We begin with the raw amino-acid sequence, 182 residues long: MITKELEQNMRKSVEAAQRNFNTIRTGRANTSLLDRLTVEYYGADTPLKSLATISTPDSQTISIQPFDLSSLVLIEKSIAMSDLGFTPNNDGKIIRINIPPLTEERRKEFCKLASKYAEEGKVALRNIRRDAIERIKKSEKESEISEDQSRDEQDNVQKLTDRFITEIEKNLSDKEQEILKV.

Residues 137–158 (KKSEKESEISEDQSRDEQDNVQ) form a disordered region.

This sequence belongs to the RRF family.

Its subcellular location is the cytoplasm. Its function is as follows. Responsible for the release of ribosomes from messenger RNA at the termination of protein biosynthesis. May increase the efficiency of translation by recycling ribosomes from one round of translation to another. The polypeptide is Ribosome-recycling factor (Prochlorococcus marinus (strain MIT 9211)).